The chain runs to 78 residues: MSDIAERVKKIVAEHLGVEPEKVTESASFIDDLGADSLDTVELVMAFEEAFNCEIPDDAAETILTVGDAIKFLEKNAA.

The 76-residue stretch at 2 to 77 (SDIAERVKKI…DAIKFLEKNA (76 aa)) folds into the Carrier domain. Serine 37 carries the O-(pantetheine 4'-phosphoryl)serine modification.

Belongs to the acyl carrier protein (ACP) family. 4'-phosphopantetheine is transferred from CoA to a specific serine of apo-ACP by AcpS. This modification is essential for activity because fatty acids are bound in thioester linkage to the sulfhydryl of the prosthetic group.

Its subcellular location is the cytoplasm. The protein operates within lipid metabolism; fatty acid biosynthesis. Functionally, carrier of the growing fatty acid chain in fatty acid biosynthesis. The polypeptide is Acyl carrier protein (Xanthobacter autotrophicus (strain ATCC BAA-1158 / Py2)).